The following is a 271-amino-acid chain: Cytochrome b termination protein 1 (271 aa).

The protein resides in the mitochondrion. Involved in 5'-end processing of mitochondrial COB, 15S rRNA, and RPM1 transcript. May also have a role in 3'-end processing of the COB pre-mRNA. This Saccharomyces cerevisiae (strain ATCC 204508 / S288c) (Baker's yeast) protein is Cytochrome b termination protein 1 (CBT1).